Consider the following 413-residue polypeptide: MLDNSRARSIVHLLILLKAHVITQIIKNTQEFTSLCTFVKVTLKATDGLTSAASKSQTDWALGENPTSRIKKLITELETSSDRIRLGEEPNLTIQLPQGDPKQRLRRKLEVFLARAKYTEELVRQAQGDVGGRCNEAKAELEEAVTGRKGPDLETQATAAAAALHNKARGTACKVAGATTDTNFAGTSLVADLMCLCAAETNSREKHICGFESHASGVWANAGTNSNAGEIWGKILDACKNREIQVEVTPQFLRIAITKFEGLLGAQAHKLTSNGNAGAWLLGYSMNAGSVTCDGQSSTNGICVDYKGSSDARGPIAWLGHIKNAITALENRDKNLQRVRKLQRQAEAILMSAEDALIEANISLGGKDMVPASEVTVPNSSNPTSRQNSVVQEPTTVSAAAITPLILPWTLLI.

The signal sequence occupies residues Met-1–Ile-22. Residues Asn-91, Asn-361, and Asn-379 are each glycosylated (N-linked (GlcNAc...) asparagine). Residue Asn-379 is the site of GPI-anchor amidated asparagine attachment. Residues Ser-380–Ile-413 constitute a propeptide, removed in mature form.

It localises to the cell membrane. VSG forms a coat on the surface of the parasite. The trypanosome evades the immune response of the host by expressing a series of antigenically distinct VSGs from an estimated 1000 VSG genes. The chain is Variant surface glycoprotein YnAT 1.3 from Trypanosoma congolense.